The following is a 189-amino-acid chain: dTTP/UTP pyrophosphatase (189 aa).

The active-site Proton acceptor is the D70.

It belongs to the Maf family. YhdE subfamily. Requires a divalent metal cation as cofactor.

The protein localises to the cytoplasm. It catalyses the reaction dTTP + H2O = dTMP + diphosphate + H(+). The enzyme catalyses UTP + H2O = UMP + diphosphate + H(+). Functionally, nucleoside triphosphate pyrophosphatase that hydrolyzes dTTP and UTP. May have a dual role in cell division arrest and in preventing the incorporation of modified nucleotides into cellular nucleic acids. This is dTTP/UTP pyrophosphatase from Akkermansia muciniphila (strain ATCC BAA-835 / DSM 22959 / JCM 33894 / BCRC 81048 / CCUG 64013 / CIP 107961 / Muc).